We begin with the raw amino-acid sequence, 318 residues long: Homoserine kinase (318 aa).

97-107 (PIGSGLGSSAC) provides a ligand contact to ATP.

It belongs to the GHMP kinase family. Homoserine kinase subfamily.

The protein localises to the cytoplasm. The enzyme catalyses L-homoserine + ATP = O-phospho-L-homoserine + ADP + H(+). It participates in amino-acid biosynthesis; L-threonine biosynthesis; L-threonine from L-aspartate: step 4/5. Its function is as follows. Catalyzes the ATP-dependent phosphorylation of L-homoserine to L-homoserine phosphate. This chain is Homoserine kinase, found in Vibrio parahaemolyticus serotype O3:K6 (strain RIMD 2210633).